The chain runs to 508 residues: UBX domain-containing protein 4 (508 aa).

The tract at residues 1 to 200 (MLWFQGAIPA…PAEDLNIRVE (200 aa)) is interaction with UBQLN1. Topologically, residues 1-413 (MLWFQGAIPA…VHSSSGDIWT (413 aa)) are cytoplasmic. 2 stretches are compositionally biased toward polar residues: residues 117-151 (SETSVANGSQSESSVSTPSASFEPNNTCENSQSRN) and 160-187 (TSDTKSDTATGGESAGHATSSQEPSGCS). The segment at 117–196 (SETSVANGSQ…SDQRPAEDLN (80 aa)) is disordered. Positions 315-393 (ERSTVARIQF…ELAPSASVVL (79 aa)) constitute a UBX domain. An intramembrane segment occupies 414 to 434 (LLGTVLYPFLAIWRLISNFLF). The Cytoplasmic segment spans residues 435–508 (SNPPPTQTSV…TWNGNSTQQM (74 aa)). The tract at residues 440–508 (TQTSVRVTSS…TWNGNSTQQM (69 aa)) is disordered. Residues 441–458 (QTSVRVTSSEPPNPASSS) show a composition bias toward polar residues. Over residues 459–491 (KSEKREPVRKRVLEKRGDDFKKEGKIYRLRTQD) the composition is skewed to basic and acidic residues. T489 carries the post-translational modification Phosphothreonine. Positions 498 to 508 (NTWNGNSTQQM) are enriched in polar residues.

In terms of assembly, directly interacts with VCP. Interacts with UBQLN1. Forms a complex with VCP and UBQLN1. In terms of tissue distribution, expressed in many tissues, including heart, brain, placenta, lung, liver, skeletal muscle, kidney and pancreas. Accumulates in Alzheimer disease-afflicted brains (at protein level).

It is found in the endoplasmic reticulum membrane. The protein localises to the nucleus envelope. Involved in endoplasmic reticulum-associated protein degradation (ERAD). Acts as a platform to recruit both UBQLN1 and VCP to the ER during ERAD. The polypeptide is UBX domain-containing protein 4 (UBXN4) (Homo sapiens (Human)).